An 833-amino-acid chain; its full sequence is Leucine--tRNA ligase (833 aa).

The short motif at 41-52 is the 'HIGH' region element; that stretch reads PYPSGAGLHVGH. Positions 610–614 match the 'KMSKS' region motif; the sequence is KMSKS. Position 613 (K613) interacts with ATP.

This sequence belongs to the class-I aminoacyl-tRNA synthetase family.

The protein localises to the cytoplasm. The catalysed reaction is tRNA(Leu) + L-leucine + ATP = L-leucyl-tRNA(Leu) + AMP + diphosphate. In Streptococcus gordonii (strain Challis / ATCC 35105 / BCRC 15272 / CH1 / DL1 / V288), this protein is Leucine--tRNA ligase.